We begin with the raw amino-acid sequence, 865 residues long: Alanine--tRNA ligase (865 aa).

Zn(2+) is bound by residues histidine 554, histidine 558, cysteine 656, and histidine 660.

It belongs to the class-II aminoacyl-tRNA synthetase family. Requires Zn(2+) as cofactor.

It is found in the cytoplasm. The catalysed reaction is tRNA(Ala) + L-alanine + ATP = L-alanyl-tRNA(Ala) + AMP + diphosphate. Its function is as follows. Catalyzes the attachment of alanine to tRNA(Ala) in a two-step reaction: alanine is first activated by ATP to form Ala-AMP and then transferred to the acceptor end of tRNA(Ala). Also edits incorrectly charged Ser-tRNA(Ala) and Gly-tRNA(Ala) via its editing domain. This is Alanine--tRNA ligase from Francisella tularensis subsp. mediasiatica (strain FSC147).